Consider the following 282-residue polypeptide: Pantothenate synthetase (282 aa).

30–37 is an ATP binding site; it reads MGGLHQGH. The active-site Proton donor is His-37. Gln-61 serves as a coordination point for (R)-pantoate. A beta-alanine-binding site is contributed by Gln-61. 146–149 lines the ATP pocket; sequence GQKD. Residue Gln-152 coordinates (R)-pantoate. Residues Ile-175 and 183–186 each bind ATP; that span reads MSTR.

This sequence belongs to the pantothenate synthetase family. As to quaternary structure, homodimer.

It localises to the cytoplasm. It catalyses the reaction (R)-pantoate + beta-alanine + ATP = (R)-pantothenate + AMP + diphosphate + H(+). It participates in cofactor biosynthesis; (R)-pantothenate biosynthesis; (R)-pantothenate from (R)-pantoate and beta-alanine: step 1/1. Catalyzes the condensation of pantoate with beta-alanine in an ATP-dependent reaction via a pantoyl-adenylate intermediate. The polypeptide is Pantothenate synthetase (Vesicomyosocius okutanii subsp. Calyptogena okutanii (strain HA)).